Consider the following 237-residue polypeptide: UPF0053 inner membrane protein YgdQ (237 aa).

Residues 1 to 17 (MLFAWITDPNAWLALGT) are Periplasmic-facing. The chain crosses the membrane as a helical span at residues 18 to 38 (LTLLEIVLGIDNIIFLSLVVA). Over 39–50 (KLPTAQRAHARR) the chain is Cytoplasmic. Residues 51 to 71 (LGLAGAMVMRLALLASIAWVT) form a helical membrane-spanning segment. The Periplasmic segment spans residues 72-79 (RLTNPLFT). Residues 80 to 100 (IFSQEISARDLILLLGGLFLI) traverse the membrane as a helical segment. The Cytoplasmic portion of the chain corresponds to 101-124 (WKASKEIHESIEGEEEGLKTRVSS). Residues 125–145 (FLGAIVQIMLLDIIFSLDSVI) form a helical membrane-spanning segment. Over 146–151 (TAVGLS) the chain is Periplasmic. Residues 152-172 (DHLFIMMAAVVIAVGVMMFAA) form a helical membrane-spanning segment. At 173-186 (RSIGDFVERHPSVK) the chain is on the cytoplasmic side. Residues 187-207 (MLALSFLILVGFTLILESFDI) traverse the membrane as a helical segment. Residues 208 to 209 (HV) are Periplasmic-facing. A helical membrane pass occupies residues 210–230 (PKGYIYFAMFFSIAVESLNLI). The Cytoplasmic segment spans residues 231 to 237 (RNKKNPL).

The protein belongs to the UPF0053 family.

It localises to the cell inner membrane. This Escherichia coli O157:H7 protein is UPF0053 inner membrane protein YgdQ (ygdQ).